The sequence spans 388 residues: Succinate--CoA ligase [ADP-forming] subunit beta (388 aa).

The region spanning 9 to 244 is the ATP-grasp domain; sequence KGVLSSFGVT…PDEYAAEELE (236 aa). Residues K46, 53–55, E99, V102, and E107 contribute to the ATP site; that span reads GRG. Mg(2+) is bound by residues N199 and D213. Residues N264 and 320-322 each bind substrate; that span reads GIM.

It belongs to the succinate/malate CoA ligase beta subunit family. In terms of assembly, heterotetramer of two alpha and two beta subunits. Requires Mg(2+) as cofactor.

It catalyses the reaction succinate + ATP + CoA = succinyl-CoA + ADP + phosphate. The enzyme catalyses GTP + succinate + CoA = succinyl-CoA + GDP + phosphate. It functions in the pathway carbohydrate metabolism; tricarboxylic acid cycle; succinate from succinyl-CoA (ligase route): step 1/1. Functionally, succinyl-CoA synthetase functions in the citric acid cycle (TCA), coupling the hydrolysis of succinyl-CoA to the synthesis of either ATP or GTP and thus represents the only step of substrate-level phosphorylation in the TCA. The beta subunit provides nucleotide specificity of the enzyme and binds the substrate succinate, while the binding sites for coenzyme A and phosphate are found in the alpha subunit. The sequence is that of Succinate--CoA ligase [ADP-forming] subunit beta from Anaplasma marginale (strain St. Maries).